A 40-amino-acid chain; its full sequence is Cell division inhibitor MciZ (40 aa).

As to quaternary structure, interacts with FtsZ. Binds to the C-terminal polymerization interface of FtsZ. Binds to FtsZ filaments.

Its activity is regulated as follows. Highly effective in inhibiting polymerization at low and intermediate concentrations of GTP and only partially effective at high GTP concentrations. Functionally, blocks Z-ring formation in the mother cell during sporulation by inhibiting the polymerization of FtsZ. Binds to the minus end of FtsZ and functions as a filament-capping protein. At high concentrations, is capable of both capping and sequestration of FtsZ. Decreases the GTPase activity of FtsZ. The protein is Cell division inhibitor MciZ of Bacillus subtilis (strain 168).